We begin with the raw amino-acid sequence, 219 residues long: Large ribosomal subunit protein uL3 (219 aa).

A disordered region spans residues 124–154 (FSGSIKRHNQSEGPKSHGSRYHRRPGSMGPI).

The protein belongs to the universal ribosomal protein uL3 family. In terms of assembly, part of the 50S ribosomal subunit. Forms a cluster with proteins L14 and L19.

Functionally, one of the primary rRNA binding proteins, it binds directly near the 3'-end of the 23S rRNA, where it nucleates assembly of the 50S subunit. The polypeptide is Large ribosomal subunit protein uL3 (Phytoplasma mali (strain AT)).